A 318-amino-acid chain; its full sequence is Pantothenate kinase (318 aa).

Residue 96 to 103 (GSVAVGKS) coordinates ATP.

Belongs to the prokaryotic pantothenate kinase family.

The protein localises to the cytoplasm. It carries out the reaction (R)-pantothenate + ATP = (R)-4'-phosphopantothenate + ADP + H(+). It participates in cofactor biosynthesis; coenzyme A biosynthesis; CoA from (R)-pantothenate: step 1/5. This Rhodopseudomonas palustris (strain HaA2) protein is Pantothenate kinase.